The primary structure comprises 2245 residues: Myosin-J heavy chain (2245 aa).

The region spanning 25–77 (QEGAGVWIPDQELGWIGADVIEHSETSADQVLVRTEDDREVKIPLSKVFQKNP) is the Myosin N-terminal SH3-like domain. The Myosin motor domain maps to 81 to 821 (EGVDDLSFLS…QLASLEDMRL (741 aa)). 174–181 (GESGAGKT) lines the ATP pocket. The segment at 646–672 (FTQSPGGHPQGNGGPTSSNTKGTSGSS) is disordered. Over residues 660–672 (PTSSNTKGTSGSS) the composition is skewed to low complexity. The interval 669-749 (SGSSSMKFLS…GFPTRRLLSE (81 aa)) is actin-binding. IQ domains lie at 824-851 (LDRS…RDAS), 872-901 (RTHS…ASLQ), and 943-972 (KLRG…EARS). A coiled-coil region spans residues 973-1812 (LRTVQEQKNK…NYHMLEDRME (840 aa)). The tract at residues 1504–1524 (KKQLTQLQQQHEQSSTQLLLA) is disordered. A compositionally biased stretch (low complexity) spans 1506–1523 (QLTQLQQQHEQSSTQLLL). Residues 1969–2188 (IDFIDQLQQS…IASICPPNKS (220 aa)) form the Dilute domain.

It belongs to the TRAFAC class myosin-kinesin ATPase superfamily. Myosin family. In terms of assembly, homodimer that associates with six light chains.

The protein resides in the contractile vacuole. Processive motor protein that can move over long distances along F-actin without disassociating; processiveness depends on high physiological Mg(2+) concentrations. Presents a high actin affinity in the presence of ADP, fast ATP hydrolysis, and a high steady-state ATPase activity in the presence of actin that is rate limited by ADP release. Physiological decrease of free Mg(2+) ions leads to an increased rate of ADP release and shortening of the fraction of time it spends in the strong acting binding states. The chain is Myosin-J heavy chain (myoJ) from Dictyostelium discoideum (Social amoeba).